A 289-amino-acid chain; its full sequence is Acetyl-coenzyme A carboxylase carboxyl transferase subunit beta (289 aa).

The region spanning 30 to 289 (IWRECPRCHS…SNAWRANHDK (260 aa)) is the CoA carboxyltransferase N-terminal domain. The Zn(2+) site is built by Cys34, Cys37, Cys52, and Cys55. A C4-type zinc finger spans residues 34–55 (CPRCHSRFYYRRFGNFDVCPEC).

Belongs to the AccD/PCCB family. As to quaternary structure, acetyl-CoA carboxylase is a heterohexamer composed of biotin carboxyl carrier protein (AccB), biotin carboxylase (AccC) and two subunits each of ACCase subunit alpha (AccA) and ACCase subunit beta (AccD). The cofactor is Zn(2+).

The protein localises to the cytoplasm. It carries out the reaction N(6)-carboxybiotinyl-L-lysyl-[protein] + acetyl-CoA = N(6)-biotinyl-L-lysyl-[protein] + malonyl-CoA. It participates in lipid metabolism; malonyl-CoA biosynthesis; malonyl-CoA from acetyl-CoA: step 1/1. Its function is as follows. Component of the acetyl coenzyme A carboxylase (ACC) complex. Biotin carboxylase (BC) catalyzes the carboxylation of biotin on its carrier protein (BCCP) and then the CO(2) group is transferred by the transcarboxylase to acetyl-CoA to form malonyl-CoA. The chain is Acetyl-coenzyme A carboxylase carboxyl transferase subunit beta from Oenococcus oeni (strain ATCC BAA-331 / PSU-1).